Consider the following 562-residue polypeptide: Protein wntless (562 aa).

At 1–13 (MSGTILENLSGRK) the chain is on the cytoplasmic side. A helical transmembrane segment spans residues 14-34 (LSILVATLLLCQVLCFLLGGL). At 35 to 239 (YAPLPAGHVT…AIHQNGGFTQ (205 aa)) the chain is on the lumenal side. Residue Asn58 is glycosylated (N-linked (GlcNAc...) asparagine). A helical membrane pass occupies residues 240-260 (IWLLLKTMLFPFVVGIMIWFW). The Cytoplasmic segment spans residues 261 to 270 (RRVHLLQRSP). The chain crosses the membrane as a helical span at residues 271–291 (ALLEYMLIYLGAALTFLNLPL). Residues 292 to 311 (EYLSLVYEMPYMLLLSDIRQ) lie on the Lumenal side of the membrane. The chain crosses the membrane as a helical span at residues 312 to 332 (GIFYAMLLTFWLVFAGEHMLI). The Cytoplasmic portion of the chain corresponds to 333 to 344 (QDAPNKSTIRSR). A helical membrane pass occupies residues 345 to 365 (YWKHLSAVVVGCISLFVFDIC). The Lumenal segment spans residues 366–390 (ERGVQLRNPFYSIWTTPLGAKVAMT). A helical membrane pass occupies residues 391–411 (FIVLAGVSAAIYFLFLCYMIW). Over 412 to 441 (KVFRNIGDKRTSLPSMSQARRLHYEGLIYR) the chain is Cytoplasmic. Residues 442-462 (FKFLMLATLVCAALTVAGFIM) form a helical membrane-spanning segment. Topologically, residues 463-482 (GQMAEGQWDWNDNVAIQPTS) are lumenal. The chain crosses the membrane as a helical span at residues 483–503 (AFLTGVYGMWNIYIFALLILY). At 504–562 (APSHKQWPAMHHSDETTQSNENIVASAASEEIEFSHLPSDSNPSEISSLTSFTRKVAFD) the chain is on the cytoplasmic side.

It belongs to the wntless family. In terms of assembly, interacts with wg; in the Golgi. Interacts with Vps35, a component of the retromer complex; wls stability is regulated by Vps35.

It localises to the presynaptic cell membrane. Its subcellular location is the postsynaptic cell membrane. The protein localises to the cell membrane. It is found in the endoplasmic reticulum membrane. The protein resides in the endosome membrane. It localises to the golgi apparatus membrane. A segment polarity gene required for wingless (wg)-dependent patterning processes, acting in both wg-sending cells and wg-target cells. In non-neuronal cells wls directs wg secretion. The wls traffic loop encompasses the Golgi, the cell surface, an endocytic compartment and a retrograde route leading back to the Golgi, and involves clathrin-mediated endocytosis and the retromer complex (a conserved protein complex consisting of Vps35 and Vps26). In neuronal cells (the larval motorneuron NMJ), the wg signal moves across the synapse via the release of wls-containing exosome-like vesicles. Postsynaptic wls is required for the trafficking of fz2 through the fz2-interacting protein Grip. This is Protein wntless from Drosophila sechellia (Fruit fly).